We begin with the raw amino-acid sequence, 254 residues long: MPESTPFAAPGPELWSRLGWTPDAGQREQLITLQELLRDWNTRVNLTRLVEGEDFWVTQVLDSLWPLKPELDTADTPRRCIDVGTGGGFPGLAVAIALPGAELTLVDSVSRKTAAVAAMARSLGMADRVSVRTERVERTGQDPRCRGQFDLALARAVASAPVVAEYLVPLLHTNGQALLYRGRWQQEDQRDLDPALALLKAKTVAIERCELPSARGPRTVIRVMPEQPTPHLYPRAVGIPSKQPLGIQADDNRS.

S-adenosyl-L-methionine-binding positions include Gly84, Phe89, 136–137, and Arg155; that span reads VE. Residues 231-254 form a disordered region; it reads HLYPRAVGIPSKQPLGIQADDNRS.

Belongs to the methyltransferase superfamily. RNA methyltransferase RsmG family.

Its subcellular location is the cytoplasm. In terms of biological role, specifically methylates the N7 position of a guanine in 16S rRNA. In Synechococcus sp. (strain WH7803), this protein is Ribosomal RNA small subunit methyltransferase G.